Reading from the N-terminus, the 418-residue chain is Gamma-glutamyl phosphate reductase (418 aa).

It belongs to the gamma-glutamyl phosphate reductase family.

Its subcellular location is the cytoplasm. The enzyme catalyses L-glutamate 5-semialdehyde + phosphate + NADP(+) = L-glutamyl 5-phosphate + NADPH + H(+). The protein operates within amino-acid biosynthesis; L-proline biosynthesis; L-glutamate 5-semialdehyde from L-glutamate: step 2/2. Catalyzes the NADPH-dependent reduction of L-glutamate 5-phosphate into L-glutamate 5-semialdehyde and phosphate. The product spontaneously undergoes cyclization to form 1-pyrroline-5-carboxylate. This Agathobacter rectalis (strain ATCC 33656 / DSM 3377 / JCM 17463 / KCTC 5835 / VPI 0990) (Eubacterium rectale) protein is Gamma-glutamyl phosphate reductase.